The primary structure comprises 477 residues: MNVLFAVSEAFPFAKTGGLADVAYSLPKALRKLGVDIRVIMPKYGDIPSDYTTKMKHLCHFTVPVGWRNQYCGIEYLNFEGVPFYFIDNEYYFKRPGYYGYYDDGERFSYFSRAVCEAIYHLDFDVDIIHVNDWHTSVIPVLLKAHYSHSPKHQKIKTVLTIHNLRYQGVFPKEVMYDLLSLPDEYFDENKLKFYDAISFLKGGIIFADKVVTVSKTYANEIRTLSHGEGLHGLLSGIGEKLVGIVNGIDYEVCNPATDKLIFVNYDANTFESRKKENKFRLQQMLNLPVSDDIVLIGMVSRLTKEKGIDLIERILSRLLTLPVQLVILGAGDYHYEQMFKYYAIAYPSKVSANICYSEELARKIYAGSDIYLMPSLTEPCGISQLIAMRYGTVPIVRETGGLKDTVKPYNQFTGEGWGFSFANYDPAELFAIIKYALSIYSDKAQWRSIVHQAMTRDNSWNASAGEYNRVYEQLLK.

Residue Lys-15 coordinates ADP-alpha-D-glucose.

This sequence belongs to the glycosyltransferase 1 family. Bacterial/plant glycogen synthase subfamily.

It carries out the reaction [(1-&gt;4)-alpha-D-glucosyl](n) + ADP-alpha-D-glucose = [(1-&gt;4)-alpha-D-glucosyl](n+1) + ADP + H(+). Its pathway is glycan biosynthesis; glycogen biosynthesis. Its function is as follows. Synthesizes alpha-1,4-glucan chains using ADP-glucose. In Caldicellulosiruptor saccharolyticus (strain ATCC 43494 / DSM 8903 / Tp8T 6331), this protein is Glycogen synthase.